A 32-amino-acid chain; its full sequence is ilv operon leader peptide (32 aa).

The polypeptide is ilv operon leader peptide (ilvL) (Escherichia coli O157:H7).